The sequence spans 579 residues: uncharacterized protein (579 aa).

It belongs to the UbiD family.

This is an uncharacterized protein from Chlamydia muridarum (strain MoPn / Nigg).